Consider the following 160-residue polypeptide: Small ribosomal subunit protein uS19v (160 aa).

It belongs to the universal ribosomal protein uS19 family.

It localises to the cytoplasm. This is Small ribosomal subunit protein uS19v (RPS15F) from Arabidopsis thaliana (Mouse-ear cress).